Consider the following 342-residue polypeptide: Uroporphyrinogen decarboxylase (342 aa).

Substrate is bound by residues 22 to 26 (RQAGR), Phe42, Asp72, Tyr146, Ser201, and His317.

It belongs to the uroporphyrinogen decarboxylase family. In terms of assembly, homodimer.

It localises to the cytoplasm. It carries out the reaction uroporphyrinogen III + 4 H(+) = coproporphyrinogen III + 4 CO2. It functions in the pathway porphyrin-containing compound metabolism; protoporphyrin-IX biosynthesis; coproporphyrinogen-III from 5-aminolevulinate: step 4/4. Catalyzes the decarboxylation of four acetate groups of uroporphyrinogen-III to yield coproporphyrinogen-III. The polypeptide is Uroporphyrinogen decarboxylase (Orientia tsutsugamushi (strain Ikeda) (Rickettsia tsutsugamushi)).